Here is a 109-residue protein sequence, read N- to C-terminus: Tyrosine-protein phosphatase 4 (109 aa).

In terms of domain architecture, Tyrosine-protein phosphatase spans 1–109; it reads SKSASIVMLT…QNSGNHPIVI (109 aa). Glu-78 is a binding site for substrate.

This sequence belongs to the protein-tyrosine phosphatase family.

It catalyses the reaction O-phospho-L-tyrosyl-[protein] + H2O = L-tyrosyl-[protein] + phosphate. The sequence is that of Tyrosine-protein phosphatase 4 (STY-4) from Styela plicata (Wrinkled sea squirt).